Reading from the N-terminus, the 134-residue chain is Holo-[acyl-carrier-protein] synthase (134 aa).

Positions 8 and 57 each coordinate Mg(2+).

This sequence belongs to the P-Pant transferase superfamily. AcpS family. The cofactor is Mg(2+).

Its subcellular location is the cytoplasm. The enzyme catalyses apo-[ACP] + CoA = holo-[ACP] + adenosine 3',5'-bisphosphate + H(+). Transfers the 4'-phosphopantetheine moiety from coenzyme A to a Ser of acyl-carrier-protein. This is Holo-[acyl-carrier-protein] synthase from Rhizobium leguminosarum bv. trifolii (strain WSM2304).